A 72-amino-acid chain; its full sequence is Large ribosomal subunit protein bL31 (72 aa).

Zn(2+)-binding residues include Cys-16, Cys-18, Cys-38, and Cys-41.

This sequence belongs to the bacterial ribosomal protein bL31 family. Type A subfamily. In terms of assembly, part of the 50S ribosomal subunit. Zn(2+) serves as cofactor.

In terms of biological role, binds the 23S rRNA. The sequence is that of Large ribosomal subunit protein bL31 from Vibrio campbellii (strain ATCC BAA-1116).